The chain runs to 474 residues: Trehalose-6-phosphate synthase (474 aa).

A D-glucose 6-phosphate-binding site is contributed by arginine 10. Residue 22 to 23 participates in UDP-alpha-D-glucose binding; it reads GG. D-glucose 6-phosphate contacts are provided by tyrosine 77 and aspartate 131. UDP-alpha-D-glucose is bound by residues arginine 263 and lysine 268. Arginine 301 lines the D-glucose 6-phosphate pocket. UDP-alpha-D-glucose-binding positions include phenylalanine 340 and 366 to 370; that span reads LVAKE.

It belongs to the glycosyltransferase 20 family. Homotetramer.

The catalysed reaction is D-glucose 6-phosphate + UDP-alpha-D-glucose = alpha,alpha-trehalose 6-phosphate + UDP + H(+). It participates in glycan biosynthesis; trehalose biosynthesis. Probably involved in the osmoprotection via the biosynthesis of trehalose. Catalyzes the transfer of glucose from UDP-alpha-D-glucose (UDP-Glc) to D-glucose 6-phosphate (Glc-6-P) to form trehalose-6-phosphate. Acts with retention of the anomeric configuration of the UDP-sugar donor. The polypeptide is Trehalose-6-phosphate synthase (Escherichia coli O1:K1 / APEC).